The primary structure comprises 372 residues: Glutamate 5-kinase (372 aa).

Residue K14 participates in ATP binding. Residues S54, D141, and N153 each coordinate substrate. An ATP-binding site is contributed by 173–174 (TD). The region spanning 280 to 358 (AGRIVLDQGA…TDILSILGFV (79 aa)) is the PUA domain.

It belongs to the glutamate 5-kinase family.

It localises to the cytoplasm. It carries out the reaction L-glutamate + ATP = L-glutamyl 5-phosphate + ADP. It participates in amino-acid biosynthesis; L-proline biosynthesis; L-glutamate 5-semialdehyde from L-glutamate: step 1/2. Functionally, catalyzes the transfer of a phosphate group to glutamate to form L-glutamate 5-phosphate. This chain is Glutamate 5-kinase, found in Herminiimonas arsenicoxydans.